A 470-amino-acid polypeptide reads, in one-letter code: MNPNQKIITIGSISLGLVVFNVLLHVVSIIVTVLVLGRGGNNGICNETVVREYNETVRIEKITQWHNTSVVEYVPYWNEGTFMNNSEAICDVKGFAPFSKDNGIRIGSRGHVFVIREPFVSCSPTECRTFFLTQGSLLNDRHSNGTVKDRSPFRTLMSVEVGQSPNVYQARFEAVAWSATACHDGKKWMTIGVTGPDSKAVAVVHYGGVPTDVVNSWAGDILRTQESSCTCIQGNCYWVMTDGPANRQAQYRIYKANQGKIVGQTDVSFNGGHIEECSCYPNDGKVECVCRDNWTGTNRPVLVISPDLSYRVGYLCAGLPSDTPRGEDAQFTGSCTSPMGNQGYGVKGFGFRQGTDVWMGRTISRTSRSGFEILRVKNGWTQTSKEQVRKQVVVDNLNWSGYSGSFTLPVELSGKDCLVPCFWVEMIRGKPEEKTIWTSSSSIVMCGVDYEVADWSWHDGAILPFDIDKM.

The Intravirion segment spans residues 1-14 (MNPNQKIITIGSIS). The involved in apical transport and lipid raft association stretch occupies residues 11–32 (GSISLGLVVFNVLLHVVSIIVT). The helical transmembrane segment at 15 to 35 (LGLVVFNVLLHVVSIIVTVLV) threads the bilayer. Residues 32–86 (TVLVLGRGGNNGICNETVVREYNETVRIEKITQWHNTSVVEYVPYWNEGTFMNNS) are hypervariable stalk region. The Virion surface portion of the chain corresponds to 36–470 (LGRGGNNGIC…AILPFDIDKM (435 aa)). N-linked (GlcNAc...) asparagine; by host glycans are attached at residues asparagine 46, asparagine 54, asparagine 67, and asparagine 84. A head of neuraminidase region spans residues 89–470 (ICDVKGFAPF…AILPFDIDKM (382 aa)). 8 disulfide bridges follow: cysteine 90–cysteine 417, cysteine 122–cysteine 127, cysteine 182–cysteine 229, cysteine 231–cysteine 236, cysteine 277–cysteine 290, cysteine 279–cysteine 288, cysteine 316–cysteine 335, and cysteine 421–cysteine 446. Arginine 116 contacts substrate. An N-linked (GlcNAc...) asparagine; by host glycan is attached at asparagine 144. Aspartate 149 serves as the catalytic Proton donor/acceptor. Arginine 150 contributes to the substrate binding site. Substrate is bound at residue 275–276 (EE). Arginine 291 lines the substrate pocket. Aspartate 292 contributes to the Ca(2+) binding site. A glycan (N-linked (GlcNAc...) asparagine; by host) is linked at asparagine 293. Residues glycine 296 and aspartate 322 each coordinate Ca(2+). Substrate is bound at residue arginine 368. Residue asparagine 398 is glycosylated (N-linked (GlcNAc...) asparagine; by host). The active-site Nucleophile is tyrosine 402.

This sequence belongs to the glycosyl hydrolase 34 family. In terms of assembly, homotetramer. Ca(2+) serves as cofactor. Post-translationally, N-glycosylated.

The protein localises to the virion membrane. It localises to the host apical cell membrane. The enzyme catalyses Hydrolysis of alpha-(2-&gt;3)-, alpha-(2-&gt;6)-, alpha-(2-&gt;8)- glycosidic linkages of terminal sialic acid residues in oligosaccharides, glycoproteins, glycolipids, colominic acid and synthetic substrates.. Inhibited by the neuraminidase inhibitors zanamivir (Relenza) and oseltamivir (Tamiflu). These drugs interfere with the release of progeny virus from infected cells and are effective against all influenza strains. Resistance to neuraminidase inhibitors is quite rare. Its function is as follows. Catalyzes the removal of terminal sialic acid residues from viral and cellular glycoconjugates. Cleaves off the terminal sialic acids on the glycosylated HA during virus budding to facilitate virus release. Additionally helps virus spread through the circulation by further removing sialic acids from the cell surface. These cleavages prevent self-aggregation and ensure the efficient spread of the progeny virus from cell to cell. Otherwise, infection would be limited to one round of replication. Described as a receptor-destroying enzyme because it cleaves a terminal sialic acid from the cellular receptors. May facilitate viral invasion of the upper airways by cleaving the sialic acid moieties on the mucin of the airway epithelial cells. Likely to plays a role in the budding process through its association with lipid rafts during intracellular transport. May additionally display a raft-association independent effect on budding. Plays a role in the determination of host range restriction on replication and virulence. Sialidase activity in late endosome/lysosome traffic seems to enhance virus replication. The sequence is that of Neuraminidase from Aves (Horse).